A 256-amino-acid chain; its full sequence is Enoyl-[acyl-carrier-protein] reductase [NADPH] FabI (256 aa).

Residues G13, 19–20, 40–44, 66–67, and I94 each bind NADP(+); these read SI, RKERS, and DV. Residue A97 coordinates substrate. Catalysis depends on proton acceptor residues Y147 and Y157. Residues K164 and 193 to 197 contribute to the NADP(+) site; that span reads IRTLS.

The protein belongs to the short-chain dehydrogenases/reductases (SDR) family. FabI subfamily. As to quaternary structure, homotetramer.

The enzyme catalyses a 2,3-saturated acyl-[ACP] + NADP(+) = a (2E)-enoyl-[ACP] + NADPH + H(+). Its pathway is lipid metabolism; fatty acid biosynthesis. Inhibited by 1,4-disubstituted imidazoles, 1,4-benzodiazepine, naphthyridinone derivatives, triclosan and its diphenyl ether analgues. Functionally, catalyzes the reduction of a carbon-carbon double bond in an enoyl moiety that is covalently linked to an acyl carrier protein (ACP). It has a preference for a long chain (C12) substrate compared to the shorter (C4) acyl group. Involved in the elongation cycle of fatty acid which are used in the lipid metabolism. The polypeptide is Enoyl-[acyl-carrier-protein] reductase [NADPH] FabI (fabI) (Staphylococcus aureus (strain NCTC 8325 / PS 47)).